The sequence spans 624 residues: Protein NRT1/ PTR FAMILY 6.1 (624 aa).

The segment at 1-20 (MVASEIKSPVSVPETPGSSS) is disordered. 2 helical membrane-spanning segments follow: residues 83-100 (MAYFGLSVNMVAFMFYVM) and 114-134 (FLGISQASSVLGGFLADAYLG). Threonine 138 carries the post-translational modification Phosphothreonine. The next 10 membrane-spanning stretches (helical) occupy residues 139 to 159 (IAIFTTMYLVGLIGITLGASL), 184 to 204 (SWQMLYLYTVLYITGFGAAGI), 230 to 250 (FFNFFYLSVTLGAIIAFTLVV), 258 to 278 (WGMAFGTLAVAMGISNALFFA), 378 to 398 (LIPIPTCTIMLSLVLTEYLTL), 422 to 442 (VFPGLSIFLILSLYYSVFVPI), 459 to 479 (VGIGLAVSIISVAWAGLFENY), 504 to 524 (WLLIQYCLIGIAEVFCIVGLL), 537 to 557 (SIGSAYAALAGGLGCFAATIL), and 585 to 605 (CLYWLLTLLSFLNFCVFLWSA).

This sequence belongs to the major facilitator superfamily. Proton-dependent oligopeptide transporter (POT/PTR) (TC 2.A.17) family. In terms of tissue distribution, expressed in flower and siliques.

It localises to the membrane. This chain is Protein NRT1/ PTR FAMILY 6.1 (NPF6.1), found in Arabidopsis thaliana (Mouse-ear cress).